Reading from the N-terminus, the 579-residue chain is Probable zinc metalloprotease EGY1, chloroplastic (579 aa).

2 disordered regions span residues 1 to 42 and 78 to 146; these read MAAA…PASA and GGGG…NEPP. A chloroplast-targeting transit peptide spans 1-44; sequence MAAAAAALASSPMVHLTASRLRLPRPARSPAAATPSPSPASAAC. The segment covering 16 to 42 has biased composition (low complexity); it reads LTASRLRLPRPARSPAAATPSPSPASA. The segment covering 78-92 has biased composition (gly residues); the sequence is GGGGGGGGGGGGTGG. Composition is skewed to low complexity over residues 104–115 and 125–137; these read AAAAEAKVGGAV and SGSF…SSSG. A run of 8 helical transmembrane segments spans residues 272 to 292, 321 to 341, 357 to 377, 392 to 412, 419 to 439, 452 to 472, 505 to 525, and 547 to 567; these read YVIS…LGIA, LLPF…IQLF, LSIP…ITQF, MAGP…GLLL, ASDL…LGLV, ATVA…TTAF, LLGL…YVLI, and AALI…WDEL.

The protein belongs to the peptidase M50B family.

It localises to the plastid. The protein resides in the chloroplast membrane. Functionally, probable membrane-associated metalloprotease that may be involved in chloroplast development. This chain is Probable zinc metalloprotease EGY1, chloroplastic (EGY1), found in Oryza sativa subsp. japonica (Rice).